A 696-amino-acid chain; its full sequence is Serotransferrin (696 aa).

2 consecutive Transferrin-like domains span residues 6-332 and 346-672; these read VRWC…NLRE and VRWC…NLRK. 2 cysteine pairs are disulfide-bonded: cysteine 9–cysteine 47 and cysteine 19–cysteine 38. Position 23 is a dimethylated arginine (arginine 23). Residue asparagine 25 is glycosylated (N-linked (GlcNAc...) asparagine). Residues aspartate 62 and tyrosine 94 each coordinate Fe(3+). Disulfide bonds link cysteine 117/cysteine 198, cysteine 157/cysteine 173, cysteine 160/cysteine 181, cysteine 170/cysteine 183, and cysteine 231/cysteine 245. Hydrogencarbonate contacts are provided by threonine 119, arginine 123, alanine 125, and glycine 126. Residue tyrosine 192 participates in Fe(3+) binding. Histidine 253 contacts Fe(3+). Disulfide bonds link cysteine 343-cysteine 605, cysteine 349-cysteine 381, cysteine 359-cysteine 372, cysteine 406-cysteine 682, cysteine 423-cysteine 646, cysteine 456-cysteine 532, cysteine 480-cysteine 673, cysteine 490-cysteine 504, cysteine 501-cysteine 515, cysteine 572-cysteine 586, and cysteine 624-cysteine 629. The residue at position 374 (serine 374) is a Phosphoserine. Fe(3+)-binding residues include aspartate 396 and tyrosine 431. 4 residues coordinate hydrogencarbonate: threonine 458, arginine 462, alanine 464, and glycine 465. N-linked (GlcNAc...) asparagine glycosylation occurs at asparagine 497. Tyrosine 526 provides a ligand contact to Fe(3+). Fe(3+) is bound at residue histidine 594. A Phosphoserine modification is found at serine 674.

This sequence belongs to the transferrin family. In terms of assembly, monomer. Part of a complex composed of SLC40A1/ferroportin, TF/transferrin and HEPH/hephaestin that transfers iron from cells to transferrin. In terms of tissue distribution, expressed by the liver and secreted in plasma.

It localises to the secreted. Transferrins are iron binding transport proteins which can bind two Fe(3+) ions in association with the binding of an anion, usually bicarbonate. It is responsible for the transport of iron from sites of absorption and heme degradation to those of storage and utilization. Serum transferrin may also have a further role in stimulating cell proliferation. The chain is Serotransferrin (TF) from Sus scrofa (Pig).